The sequence spans 489 residues: Probable apyrase 1 (489 aa).

The Cytoplasmic segment spans residues 1-28 (MRRFSAAAGARQQQQQGEAVSDRVLRFR). The chain crosses the membrane as a helical; Signal-anchor for type II membrane protein span at residues 29–49 (GVLVVVLAPVLLISLVLLLMP). Topologically, residues 50–489 (RAPASATVEG…GSAIEVASSS (440 aa)) are extracellular. Position 89–99 (89–99 (VIFDAGSSGSR)) interacts with ATP. The Proton acceptor role is filled by glutamate 211. 235–245 (GVVDLGGGSVQ) provides a ligand contact to ATP.

Belongs to the GDA1/CD39 NTPase family. Ca(2+) serves as cofactor.

It localises to the membrane. It catalyses the reaction a ribonucleoside 5'-triphosphate + 2 H2O = a ribonucleoside 5'-phosphate + 2 phosphate + 2 H(+). In terms of biological role, catalyzes the hydrolysis of phosphoanhydride bonds of nucleoside tri- and di-phosphates. In Oryza sativa subsp. japonica (Rice), this protein is Probable apyrase 1 (APY1).